The primary structure comprises 524 residues: FAD-dependent monooxygenase opdD (524 aa).

FAD contacts are provided by Glu48 and Arg145.

Belongs to the paxM FAD-dependent monooxygenase family.

It participates in secondary metabolite biosynthesis. Its function is as follows. FAD-dependent monooxygenase; part of the gene cluster that mediates the biosynthesis of oxopyrrolidines, polyketide-amino acid hybrid compounds with feature structures of tetramic acid. Does not seem to play a role in oxopyrrolidines A and B biosynthesis. May be involved in further modifications of these oxopyrrolidines. The polypeptide is FAD-dependent monooxygenase opdD (Penicillium oxalicum (strain 114-2 / CGMCC 5302) (Penicillium decumbens)).